The primary structure comprises 502 residues: UPF0371 protein CLK_3516 (502 aa).

This sequence belongs to the UPF0371 family.

The polypeptide is UPF0371 protein CLK_3516 (Clostridium botulinum (strain Loch Maree / Type A3)).